The chain runs to 342 residues: (+)-pulegone reductase (342 aa).

NADP(+)-binding positions include 163–166, Lys189, Tyr205, Asn229, 251–257, 281–283, and Asn331; these read GSVG, CGMVSQY, and FVV.

Belongs to the NADP-dependent oxidoreductase L4BD family.

The protein resides in the cytoplasm. The catalysed reaction is (2R,5R)-isomenthone + NADP(+) = (R)-pulegone + NADPH + H(+). The enzyme catalyses (1R,4S)-menthone + NADP(+) = (R)-pulegone + NADPH + H(+). It participates in secondary metabolite biosynthesis; terpenoid biosynthesis. Not inhibited by (+)-menthofuran. Monoterpene synthase that catalyzes the specific reduction of the 4,8-double bond of (+)-pulegone to produce both (-)-menthone and (+)-isomenthone in a 70:30 ratio. Unable to utilize either (-)-isopiperitenone or (+)-cis-isopulegone, or to catalyze the reverse reaction with (-)-menthone or (+)-isomenthone. Has an absolute requirement for NADPH. The polypeptide is (+)-pulegone reductase (Mentha piperita (Peppermint)).